Here is a 313-residue protein sequence, read N- to C-terminus: Protein PALE CRESS, chloroplastic (313 aa).

Residues methionine 1–serine 22 constitute a chloroplast transit peptide.

Expressed in green tissues, including leaves. Accumulates in chloroplasts of mature stomatal guard cells.

It is found in the plastid. It localises to the chloroplast. The protein resides in the chromoplast. The protein localises to the etioplast. Its subcellular location is the amyloplast. In terms of biological role, required for the differentiation of chloroplast from proplastids or etioplasts, probably by modulating some chloroplast-encoded genes expression and mRNA maturation. Involved in leaf-cells differentiation. The protein is Protein PALE CRESS, chloroplastic (PAC) of Arabidopsis thaliana (Mouse-ear cress).